A 601-amino-acid polypeptide reads, in one-letter code: Beta-phellandrene synthase (601 aa).

A chloroplast-targeting transit peptide spans 1–35; it reads MSTISIHHVGILRNPLPSKNKRALINNPWSLSLPR. Positions 356 and 360 each coordinate Mn(2+). Positions 356-360 match the DDXXD motif motif; sequence DDVYD. Homodimerization stretches follow at residues 362 to 368 and 434 to 471; these read YGTLDEL and EAEW…LSIP. Mn(2+)-binding residues include Asp-499 and Glu-507.

This sequence belongs to the terpene synthase family. Homodimer. Mn(2+) serves as cofactor. It depends on Mg(2+) as a cofactor. Expressed in peltate glandular trichomes. Present at low levels in flowers and stems.

Its subcellular location is the plastid. The protein localises to the chloroplast. The catalysed reaction is (2E)-geranyl diphosphate = beta-phellandrene + diphosphate. It carries out the reaction (2E)-geranyl diphosphate = (1R,5R)-sabinene + diphosphate. The protein operates within secondary metabolite biosynthesis; terpenoid biosynthesis. Involved in the biosynthesis of phenolic monoterpenes natural products. Monoterpene synthase that catalyzes mainly the formation of olefins such as sabinene and beta-phellandrene, and minor amounts of other monoterpenes (e.g. myrcene, gamma-terpinene, alpha-thujene and alpha-pinene) from geranyl diphosphate (GPP). The sequence is that of Beta-phellandrene synthase from Origanum vulgare (Wild marjoram).